A 195-amino-acid chain; its full sequence is MPKLGMREIRRAQLIDATLHTIDQTGLAGATLASVAQRASISTGIVSHYFGDKDGLLEATMRHVLRDLWQATSRRRRAAKADPRSKLRAVVAANFDAEQTSGPVMKTWLAFWSESMHKPPLRRLQYVNTRRLNSNLCADFSKAMPRAAARRAASGLAALIDGLWLRGALSGEPFDTKAALRVANDYIDLVLASRE.

Residues 8 to 68 enclose the HTH tetR-type domain; the sequence is EIRRAQLIDA…ATMRHVLRDL (61 aa). Positions 31 to 50 form a DNA-binding region, H-T-H motif; it reads TLASVAQRASISTGIVSHYF.

Its pathway is amine and polyamine biosynthesis; betaine biosynthesis via choline pathway [regulation]. Its function is as follows. Repressor involved in the biosynthesis of the osmoprotectant glycine betaine. It represses transcription of the choline transporter BetT and the genes of BetAB involved in the synthesis of glycine betaine. The polypeptide is HTH-type transcriptional regulator BetI (Paraburkholderia phytofirmans (strain DSM 17436 / LMG 22146 / PsJN) (Burkholderia phytofirmans)).